The sequence spans 338 residues: Nicotinate-nucleotide--dimethylbenzimidazole phosphoribosyltransferase (338 aa).

Glu305 serves as the catalytic Proton acceptor.

It belongs to the CobT family.

The catalysed reaction is 5,6-dimethylbenzimidazole + nicotinate beta-D-ribonucleotide = alpha-ribazole 5'-phosphate + nicotinate + H(+). It functions in the pathway nucleoside biosynthesis; alpha-ribazole biosynthesis; alpha-ribazole from 5,6-dimethylbenzimidazole: step 1/2. In terms of biological role, catalyzes the synthesis of alpha-ribazole-5'-phosphate from nicotinate mononucleotide (NAMN) and 5,6-dimethylbenzimidazole (DMB). The chain is Nicotinate-nucleotide--dimethylbenzimidazole phosphoribosyltransferase from Novosphingobium aromaticivorans (strain ATCC 700278 / DSM 12444 / CCUG 56034 / CIP 105152 / NBRC 16084 / F199).